The following is a 426-amino-acid chain: Glucan endo-1,3-beta-glucosidase 11 (426 aa).

A signal peptide spans 1-30; it reads MELTSFHRSSLLFLISLTLIILPTTTTSIG. The N-linked (GlcNAc...) asparagine glycan is linked to asparagine 112. Catalysis depends on glutamate 121, which acts as the Proton donor. Asparagine 126 carries an N-linked (GlcNAc...) asparagine glycan. Glutamate 266 (nucleophile) is an active-site residue. Over residues 360–372 the composition is skewed to gly residues; that stretch reads GGGTGGGNSSSGG. The interval 360-389 is disordered; sequence GGGTGGGNSSSGGGRDKSPVFPVSPVAPDS. A glycan (N-linked (GlcNAc...) asparagine) is linked at asparagine 367. Residue serine 398 is the site of GPI-anchor amidated serine attachment. The propeptide at 399–426 is removed in mature form; it reads ASPVTGKRKGKGAILSLVVSMLLARHLL.

This sequence belongs to the glycosyl hydrolase 17 family.

The protein localises to the secreted. The protein resides in the cell wall. It localises to the cell membrane. The catalysed reaction is Hydrolysis of (1-&gt;3)-beta-D-glucosidic linkages in (1-&gt;3)-beta-D-glucans.. The sequence is that of Glucan endo-1,3-beta-glucosidase 11 from Arabidopsis thaliana (Mouse-ear cress).